The primary structure comprises 348 residues: Succinoglycan biosynthesis protein ExoO (348 aa).

Positions 322-348 are disordered; the sequence is HSAPRAAPVTAAAERSPLGNDPRISKG. Low complexity predominate over residues 324-334; sequence APRAAPVTAAA.

Belongs to the glycosyltransferase 2 family.

The protein resides in the cytoplasm. Its pathway is glycan metabolism; exopolysaccharide biosynthesis. Functionally, glycosyltransferase required for the synthesis of succinoglycan (EPS I). Needed for the addition of the fifth sugar (glucose), catalyzes the formation of a beta-1,6 linkage between the fourth and fifth sugar. The chain is Succinoglycan biosynthesis protein ExoO (exoO) from Rhizobium meliloti (strain 1021) (Ensifer meliloti).